Consider the following 594-residue polypeptide: DNA ligase 2 (594 aa).

E250 contributes to the ATP binding site. K252 (N6-AMP-lysine intermediate) is an active-site residue. Residues R257, R273, E303, F343, R419, and K425 each contribute to the ATP site.

The protein belongs to the ATP-dependent DNA ligase family. Mg(2+) is required as a cofactor.

The catalysed reaction is ATP + (deoxyribonucleotide)n-3'-hydroxyl + 5'-phospho-(deoxyribonucleotide)m = (deoxyribonucleotide)n+m + AMP + diphosphate.. Functionally, DNA ligase that seals nicks in double-stranded DNA during DNA replication, DNA recombination and DNA repair. This chain is DNA ligase 2, found in Korarchaeum cryptofilum (strain OPF8).